A 332-amino-acid polypeptide reads, in one-letter code: Tryptophan--tRNA ligase (332 aa).

ATP-binding positions include Lys13–Ser15 and Gly21–Asn22. The short motif at Pro14–Asn22 is the 'HIGH' region element. L-tryptophan is bound at residue Asp137. Residues Gly149–Asp151, Ile188, and Lys197–Ser201 each bind ATP. A 'KMSKS' region motif is present at residues Lys197 to Ser201.

It belongs to the class-I aminoacyl-tRNA synthetase family. In terms of assembly, homodimer.

The protein resides in the cytoplasm. It catalyses the reaction tRNA(Trp) + L-tryptophan + ATP = L-tryptophyl-tRNA(Trp) + AMP + diphosphate + H(+). Catalyzes the attachment of tryptophan to tRNA(Trp). In Clostridium perfringens (strain 13 / Type A), this protein is Tryptophan--tRNA ligase.